A 222-amino-acid polypeptide reads, in one-letter code: Zinc finger C2HC domain-containing protein 1B (222 aa).

The C2HC/C3H-type 1 zinc-finger motif lies at 14–43 (ELFPCEVCGRRFAADVLERHGPICKKLFNR). The Zn(2+) site is built by cysteine 18, cysteine 21, histidine 33, and cysteine 37. Positions 48–78 (FSSLKQRLQGTDIPTVKKTPQSKSPPVRKSN) are disordered. The C2HC/C3H-type 2; degenerate zinc finger occupies 117 to 146 (DYIQRPYCMRRFNESAAERHTNFCKDQSSR). Residues 196–222 (PTKSGLAMDPASGAKLRQGFSKSSKKD) form a disordered region.

This sequence belongs to the ZC2HC1 family. Requires Zn(2+) as cofactor.

In Homo sapiens (Human), this protein is Zinc finger C2HC domain-containing protein 1B (ZC2HC1B).